Reading from the N-terminus, the 536-residue chain is ATP synthase subunit beta (536 aa).

Positions 1-57 are disordered; it reads MVKAVSSSKGAAKVEQKKSAARSGVKKNASKSQASLQDTSSPLKTSSKNAHAKKDVQ. Residues 30-49 are compositionally biased toward polar residues; the sequence is SKSQASLQDTSSPLKTSSKN. 208 to 215 contributes to the ATP binding site; that stretch reads GGAGVGKT.

It belongs to the ATPase alpha/beta chains family. F-type ATPases have 2 components, CF(1) - the catalytic core - and CF(0) - the membrane proton channel. CF(1) has five subunits: alpha(3), beta(3), gamma(1), delta(1), epsilon(1). CF(0) has three main subunits: a(1), b(2) and c(9-12). The alpha and beta chains form an alternating ring which encloses part of the gamma chain. CF(1) is attached to CF(0) by a central stalk formed by the gamma and epsilon chains, while a peripheral stalk is formed by the delta and b chains.

The protein resides in the cell inner membrane. It carries out the reaction ATP + H2O + 4 H(+)(in) = ADP + phosphate + 5 H(+)(out). In terms of biological role, produces ATP from ADP in the presence of a proton gradient across the membrane. The catalytic sites are hosted primarily by the beta subunits. The polypeptide is ATP synthase subunit beta (Bartonella quintana (strain Toulouse) (Rochalimaea quintana)).